Here is a 380-residue protein sequence, read N- to C-terminus: 1-deoxy-D-xylulose 5-phosphate reductoisomerase (380 aa).

Residues Ser-10, Gly-11, Ser-12, Ile-13, Gly-36, Lys-37, Asn-38, and Asn-120 each contribute to the NADPH site. Lys-121 lines the 1-deoxy-D-xylulose 5-phosphate pocket. NADPH is bound at residue Glu-122. Asp-146 contacts Mn(2+). Residues Ser-147, Glu-148, Ser-172, and His-195 each coordinate 1-deoxy-D-xylulose 5-phosphate. Glu-148 contacts Mn(2+). Gly-201 is an NADPH binding site. Positions 208, 213, 214, and 217 each coordinate 1-deoxy-D-xylulose 5-phosphate. Glu-217 is a Mn(2+) binding site.

It belongs to the DXR family. Requires Mg(2+) as cofactor. It depends on Mn(2+) as a cofactor.

The catalysed reaction is 2-C-methyl-D-erythritol 4-phosphate + NADP(+) = 1-deoxy-D-xylulose 5-phosphate + NADPH + H(+). The protein operates within isoprenoid biosynthesis; isopentenyl diphosphate biosynthesis via DXP pathway; isopentenyl diphosphate from 1-deoxy-D-xylulose 5-phosphate: step 1/6. Catalyzes the NADPH-dependent rearrangement and reduction of 1-deoxy-D-xylulose-5-phosphate (DXP) to 2-C-methyl-D-erythritol 4-phosphate (MEP). The chain is 1-deoxy-D-xylulose 5-phosphate reductoisomerase from Bacillus cereus (strain ATCC 10987 / NRS 248).